Consider the following 400-residue polypeptide: Argininosuccinate synthase (400 aa).

Residues 10 to 18 (AYSGGVDTS) and A38 each bind ATP. Residue Y89 participates in L-citrulline binding. G119 is a binding site for ATP. Residues T121, N125, and D126 each coordinate L-aspartate. An L-citrulline-binding site is contributed by N125. L-citrulline-binding residues include R129, S177, S186, E262, and Y274.

It belongs to the argininosuccinate synthase family. Type 1 subfamily. In terms of assembly, homotetramer.

It localises to the cytoplasm. The enzyme catalyses L-citrulline + L-aspartate + ATP = 2-(N(omega)-L-arginino)succinate + AMP + diphosphate + H(+). Its pathway is amino-acid biosynthesis; L-arginine biosynthesis; L-arginine from L-ornithine and carbamoyl phosphate: step 2/3. This Prochlorococcus marinus (strain NATL2A) protein is Argininosuccinate synthase.